The following is a 112-amino-acid chain: Ciliary microtubule inner protein 3 (112 aa).

A disordered region spans residues 1–34; the sequence is MCKDSQKPSVPSHGPKTPSCKGVKAPHSSRPRAW.

The protein belongs to the CIMIP3-like family.

The protein localises to the cytoplasm. It localises to the cytoskeleton. It is found in the flagellum axoneme. This chain is Ciliary microtubule inner protein 3, found in Homo sapiens (Human).